A 245-amino-acid polypeptide reads, in one-letter code: Photosystem II protein PSBS2 (245 aa).

The N-terminal 25 residues, 1 to 25 (MAMTLSTKAFAQRGVSARKNTVRVY), are a transit peptide targeting the chloroplast. The next 4 helical transmembrane spans lie at 72–92 (LFVGRLAMVGFSASLIGEILT), 108–128 (GIEVDGLVIGLIAFNLIAAVL), 185–205 (LGFAFSLIGEAVTGKGALAQF), and 217–237 (EFGLVVFILFLLFAAINEGSG).

Belongs to the ELIP/psbS family.

Its subcellular location is the plastid. It is found in the chloroplast thylakoid membrane. Required for non-photochemical quenching (NPQ), a mechanism that converts and dissipates the harmful excess absorbed light energy into heat and protect the photosynthetic apparatus from photo-oxidative damage. Seems involved in the activation of NPQ, possibly by promoting conformational changes required for activation of LHCSR3-dependent quenching in the antenna of photosystem II (PSII). In Chlamydomonas reinhardtii (Chlamydomonas smithii), this protein is Photosystem II protein PSBS2.